The chain runs to 736 residues: Catalase-peroxidase (736 aa).

The first 21 residues, 1–21 (MFKKTILSFVISAVMVTAASA), serve as a signal peptide directing secretion. A cross-link (tryptophyl-tyrosyl-methioninium (Trp-Tyr) (with M-250)) is located at residues 102 to 224 (WHAAGTYRTH…LAAVEMGLIY (123 aa)). Catalysis depends on H103, which acts as the Proton acceptor. Positions 224-250 (YVNPVGPHGNPDPLLAANDIRMSFGRM) form a cross-link, tryptophyl-tyrosyl-methioninium (Tyr-Met) (with W-102). H265 serves as a coordination point for heme b.

This sequence belongs to the peroxidase family. Peroxidase/catalase subfamily. Homodimer or homotetramer. Heme b serves as cofactor. In terms of processing, formation of the three residue Trp-Tyr-Met cross-link is important for the catalase, but not the peroxidase activity of the enzyme.

It catalyses the reaction H2O2 + AH2 = A + 2 H2O. The catalysed reaction is 2 H2O2 = O2 + 2 H2O. Functionally, bifunctional enzyme with both catalase and broad-spectrum peroxidase activity. This is Catalase-peroxidase from Shewanella woodyi (strain ATCC 51908 / MS32).